The following is a 545-amino-acid chain: Ribulokinase (545 aa).

Belongs to the ribulokinase family.

The enzyme catalyses D-ribulose + ATP = D-ribulose 5-phosphate + ADP + H(+). The catalysed reaction is L-ribulose + ATP = L-ribulose 5-phosphate + ADP + H(+). It participates in carbohydrate degradation; L-arabinose degradation via L-ribulose; D-xylulose 5-phosphate from L-arabinose (bacterial route): step 2/3. The protein is Ribulokinase of Staphylococcus aureus (strain USA300).